Here is a 325-residue protein sequence, read N- to C-terminus: Ribose-phosphate pyrophosphokinase (325 aa).

Residues 45-47 and 104-105 each bind ATP; these read NGE and RQ. Positions 138 and 178 each coordinate Mg(2+). Lysine 202 is a catalytic residue. D-ribose 5-phosphate is bound by residues arginine 204, aspartate 230, and 234 to 238; that span reads DTGGT.

Belongs to the ribose-phosphate pyrophosphokinase family. Class I subfamily. Homohexamer. The cofactor is Mg(2+).

The protein localises to the cytoplasm. The enzyme catalyses D-ribose 5-phosphate + ATP = 5-phospho-alpha-D-ribose 1-diphosphate + AMP + H(+). The protein operates within metabolic intermediate biosynthesis; 5-phospho-alpha-D-ribose 1-diphosphate biosynthesis; 5-phospho-alpha-D-ribose 1-diphosphate from D-ribose 5-phosphate (route I): step 1/1. In terms of biological role, involved in the biosynthesis of the central metabolite phospho-alpha-D-ribosyl-1-pyrophosphate (PRPP) via the transfer of pyrophosphoryl group from ATP to 1-hydroxyl of ribose-5-phosphate (Rib-5-P). This chain is Ribose-phosphate pyrophosphokinase, found in Corynebacterium efficiens (strain DSM 44549 / YS-314 / AJ 12310 / JCM 11189 / NBRC 100395).